Consider the following 508-residue polypeptide: UDP-N-acetylmuramyl-tripeptide synthetase (508 aa).

Position 35 (S35) interacts with UDP-N-acetyl-alpha-D-muramoyl-L-alanyl-D-glutamate. Residue 118 to 124 (GTDGKSS) coordinates ATP. UDP-N-acetyl-alpha-D-muramoyl-L-alanyl-D-glutamate-binding positions include 163–164 (ST), T190, and R200. K232 carries the post-translational modification N6-carboxylysine.

This sequence belongs to the MurCDEF family. MurE subfamily. In terms of processing, carboxylation is probably crucial for Mg(2+) binding and, consequently, for the gamma-phosphate positioning of ATP.

It localises to the cytoplasm. Its pathway is cell wall biogenesis; peptidoglycan biosynthesis. In terms of biological role, catalyzes the addition of an amino acid to the nucleotide precursor UDP-N-acetylmuramoyl-L-alanyl-D-glutamate (UMAG) in the biosynthesis of bacterial cell-wall peptidoglycan. The protein is UDP-N-acetylmuramyl-tripeptide synthetase of Borrelia garinii subsp. bavariensis (strain ATCC BAA-2496 / DSM 23469 / PBi) (Borreliella bavariensis).